The primary structure comprises 377 residues: Cilia- and flagella-associated protein 263 (377 aa).

2 coiled-coil regions span residues 95-139 and 169-355; these read LTVE…ADIR and QKVM…LKGY.

It belongs to the CFAP263 family. In terms of assembly, forms a complex with CFAP184; the interaction is required for functional activity in cilia. Interacts with HAP1 and PCM1.

It is found in the cytoplasm. It localises to the cytoskeleton. The protein resides in the microtubule organizing center. Its subcellular location is the centrosome. The protein localises to the centriolar satellite. It is found in the cell projection. It localises to the cilium. Functionally, component of centriolar satellites contributing to primary cilium formation. In complex with CFAP263, acts as a regulator of ciliary beating that connects radial spoke 3 (RS3) to the inner dynein arm (IDA) and the nexin-dynein regulatory complex (N-DRC). The complex is positioned parallel to N-DRC and forms a connection between the arch at the base of RS3, the IDA tail and N-DRC. This is Cilia- and flagella-associated protein 263 (Cfap263) from Mus musculus (Mouse).